The chain runs to 212 residues: dITP/XTP pyrophosphatase (212 aa).

Position 7 to 12 (7 to 12) interacts with substrate; it reads SRNKKK. Catalysis depends on aspartate 72, which acts as the Proton acceptor. Aspartate 72 serves as a coordination point for Mg(2+). Residues serine 73, 163 to 166, lysine 187, and 192 to 193 each bind substrate; these read FGYD and HR. Residues 164 to 194 form a disordered region; sequence GYDPLFEPAEAPGQSSAELTPERKDELSHRG. Over residues 183-192 the composition is skewed to basic and acidic residues; that stretch reads TPERKDELSH.

The protein belongs to the HAM1 NTPase family. In terms of assembly, homodimer. It depends on Mg(2+) as a cofactor.

The enzyme catalyses XTP + H2O = XMP + diphosphate + H(+). It carries out the reaction dITP + H2O = dIMP + diphosphate + H(+). It catalyses the reaction ITP + H2O = IMP + diphosphate + H(+). Pyrophosphatase that catalyzes the hydrolysis of nucleoside triphosphates to their monophosphate derivatives, with a high preference for the non-canonical purine nucleotides XTP (xanthosine triphosphate), dITP (deoxyinosine triphosphate) and ITP. Seems to function as a house-cleaning enzyme that removes non-canonical purine nucleotides from the nucleotide pool, thus preventing their incorporation into DNA/RNA and avoiding chromosomal lesions. This chain is dITP/XTP pyrophosphatase, found in Corynebacterium urealyticum (strain ATCC 43042 / DSM 7109).